Reading from the N-terminus, the 412-residue chain is UPF0754 membrane protein MAE_37850 (412 aa).

2 helical membrane-spanning segments follow: residues 3–23 (LPTL…GYFT) and 387–407 (IVNL…IILI).

The protein belongs to the UPF0754 family.

It localises to the cell inner membrane. This Microcystis aeruginosa (strain NIES-843 / IAM M-2473) protein is UPF0754 membrane protein MAE_37850.